The sequence spans 1432 residues: ABC transporter asL7 (1432 aa).

Over residues 1-20 the composition is skewed to polar residues; the sequence is MFDTTKLQSSTQDGSTSSVT. The segment at 1-36 is disordered; sequence MFDTTKLQSSTQDGSTSSVTGEPIFGANDPNSELNP. An ABC transporter 1 domain is found at 91–341; the sequence is LALPGMLIRN…FERLGFECPS (251 aa). N265 carries N-linked (GlcNAc...) asparagine glycosylation. 6 helical membrane passes run 450-470, 484-504, 530-550, 559-579, 597-617, and 702-722; these read PTIV…SLFF, VVLF…VMTL, VLMD…VFYF, GNFF…SGIF, MIPA…MVPI, and IGIV…TSEY. Residues 786-1029 form the ABC transporter 2 domain; sequence FHWRNVCYDI…TLVEYFERKA (244 aa). 822–829 serves as a coordination point for ATP; it reads GVSGAGKT. N1017 is a glycosylation site (N-linked (GlcNAc...) asparagine). A disordered region spans residues 1076-1095; that stretch reads LSRLREHGSQSNSHDSEKSE. 6 consecutive transmembrane segments (helical) span residues 1135-1155, 1166-1186, 1215-1235, 1251-1271, 1279-1299, and 1317-1337; these read FALC…SPLS, VFQL…QFII, IPYY…PIGL, LMWL…HFCI, AGAN…GALI, and LSYL…VTCA. Residue N1371 is glycosylated (N-linked (GlcNAc...) asparagine). A helical membrane pass occupies residues 1402–1422; that stretch reads FGIIWVYVIFNISAAITLYWV.

It belongs to the ABC transporter superfamily. ABCG family. PDR (TC 3.A.1.205) subfamily.

The protein localises to the cell membrane. In terms of biological role, ABC transporter; part of the gene cluster that mediates the biosynthesis of xenovulene A, an unusual meroterpenoid that has potent inhibitory effects on the human gamma-aminobutyrate A (GABAA) benzodiazepine receptor. This Sarocladium schorii (Acremonium strictum (strain IMI 501407)) protein is ABC transporter asL7.